The chain runs to 125 residues: Holo-[acyl-carrier-protein] synthase (125 aa).

Residues Asp-8 and Glu-57 each coordinate Mg(2+).

Belongs to the P-Pant transferase superfamily. AcpS family. Mg(2+) serves as cofactor.

The protein localises to the cytoplasm. It carries out the reaction apo-[ACP] + CoA = holo-[ACP] + adenosine 3',5'-bisphosphate + H(+). Functionally, transfers the 4'-phosphopantetheine moiety from coenzyme A to a Ser of acyl-carrier-protein. The sequence is that of Holo-[acyl-carrier-protein] synthase from Nitrosomonas eutropha (strain DSM 101675 / C91 / Nm57).